We begin with the raw amino-acid sequence, 59 residues long: Cecropin-A (59 aa).

The signal sequence occupies residues 1–23 (MNFNKLFVIVLLAALAFFGQAEA). Residue L57 is modified to Leucine amide.

The protein belongs to the cecropin family.

It localises to the secreted. Cecropins have lytic and antibacterial activity against several Gram-positive and Gram-negative bacteria. In Culex pipiens pipiens (Northern house mosquito), this protein is Cecropin-A (CECA).